The following is a 334-amino-acid chain: Cytochrome c biogenesis protein CcsA (334 aa).

Helical transmembrane passes span 12–32 (NTAF…VVFP), 35–55 (WLVQ…TALL), 67–87 (ISNL…VHFI), 96–116 (FVGA…ALTL), 141–161 (VMMV…AFLF), 242–262 (IIGL…VWAN), 277–297 (WALI…TKGW), and 303–323 (AILA…VNLL).

It belongs to the CcmF/CycK/Ccl1/NrfE/CcsA family. In terms of assembly, may interact with ccs1.

The protein localises to the cellular thylakoid membrane. Functionally, required during biogenesis of c-type cytochromes (cytochrome c6 and cytochrome f) at the step of heme attachment. In Synechocystis sp. (strain ATCC 27184 / PCC 6803 / Kazusa), this protein is Cytochrome c biogenesis protein CcsA.